We begin with the raw amino-acid sequence, 279 residues long: 3-methyl-2-oxobutanoate hydroxymethyltransferase (279 aa).

2 residues coordinate Mg(2+): Asp-53 and Asp-92. 3-methyl-2-oxobutanoate contacts are provided by residues 53-54 (DS), Asp-92, and Lys-122. Residue Glu-124 participates in Mg(2+) binding. Glu-191 (proton acceptor) is an active-site residue.

It belongs to the PanB family. In terms of assembly, homodecamer; pentamer of dimers. It depends on Mg(2+) as a cofactor.

The protein localises to the cytoplasm. It catalyses the reaction 3-methyl-2-oxobutanoate + (6R)-5,10-methylene-5,6,7,8-tetrahydrofolate + H2O = 2-dehydropantoate + (6S)-5,6,7,8-tetrahydrofolate. It participates in cofactor biosynthesis; (R)-pantothenate biosynthesis; (R)-pantoate from 3-methyl-2-oxobutanoate: step 1/2. In terms of biological role, catalyzes the reversible reaction in which hydroxymethyl group from 5,10-methylenetetrahydrofolate is transferred onto alpha-ketoisovalerate to form ketopantoate. This is 3-methyl-2-oxobutanoate hydroxymethyltransferase from Maricaulis maris (strain MCS10) (Caulobacter maris).